The following is a 144-amino-acid chain: Leghemoglobin 3 (144 aa).

Position 2 is an N-acetylvaline (V2). The region spanning A3–A144 is the Globin domain. Nitrated tyrosine occurs at positions 26 and 31. A heme b-binding site is contributed by S46. S46 carries the phosphoserine modification. H62 is a binding site for O2. The heme b site is built by K65, H93, and K96. Y134 is subject to Nitrated tyrosine.

Belongs to the plant globin family. In terms of assembly, monomer. In terms of processing, nitrated mainly at Tyr-31 and, to a lower extent, at Tyr-26 and Tyr-134, in effective nodules and particularly in hypoxic conditions; this mechanism may play a protective role in the symbiosis by buffering toxic peroxynitrite NO(2)(-). Nitration level decrease during nodule senescence. Post-translationally, phosphorylation at Ser-46 disrupts the molecular environment of its porphyrin ring oxygen binding pocket, thus leading to a reduced oxygen consumption and to the delivery of oxygen O(2) to symbiosomes. As to expression, specifically expressed in root nodules.

It is found in the cytoplasm. The protein resides in the cytosol. Its subcellular location is the nucleus. In terms of biological role, leghemoglobin that reversibly binds oxygen O(2) through a pentacoordinated heme iron. In root nodules, facilitates the diffusion of oxygen to the bacteroids while preventing the bacterial nitrogenase from being inactivated by buffering dioxygen, nitric oxide and carbon monoxide, and promoting the formation of reactive oxygen species (ROS, e.g. H(2)O(2)). This role is essential for symbiotic nitrogen fixation (SNF). This chain is Leghemoglobin 3, found in Glycine max (Soybean).